Consider the following 306-residue polypeptide: N(1)-aminopropylagmatine ureohydrolase (306 aa).

Mn(2+) contacts are provided by histidine 121, aspartate 145, histidine 147, aspartate 149, aspartate 228, and aspartate 230.

Belongs to the arginase family. Requires Mn(2+) as cofactor.

It carries out the reaction N(1)-(3-aminopropyl)agmatine + H2O = urea + spermidine. Its pathway is amine and polyamine biosynthesis; spermidine biosynthesis. Ureohydrolase involved in the biosynthesis of spermidine via the carboxyaminopropylagmatine (CAPA) pathway. Catalyzes the conversion of aminopropylagmatine (APA) to spermidine and urea. Is highly specific to APA and incapable of releasing measurable urea from CAPA, agmatine, arginine, guanidine, guanidinobutyrate and guanidinopropionate. This chain is N(1)-aminopropylagmatine ureohydrolase, found in Synechocystis sp. (strain ATCC 27184 / PCC 6803 / Kazusa).